A 354-amino-acid polypeptide reads, in one-letter code: MSLRKIIHVDCDCFYAAIEMRDDPRLAGRPMAVGGSPDHRGVIATCNYEARAYGVRSAMSSRHALKLCPDLLIVKPRFEAYREASREIHTIFRDYTELIEPLSLDEAYLDVSDSQWYSGSATRIAEDIRRRVARTLHITVSAGVAPNKFLAKIASDWRKPNGLFVITPNEVETFVAALPVARLHGVGKVTADKLTRLGIETCLHLREWSRLALVREFGSFGERLWGLARGIDERAVHNDSRRQSVSVENTYDTDLPDLASCLARLPELLDSLNERIARMDSSYRPDKPFVKVKFHDFSQTTMEQAGAGRDLESYRQLLGQAFARGGKPVRLLGVGVRLRDLRGAHEQLELFPPK.

The 182-residue stretch at 6–187 folds into the UmuC domain; it reads IIHVDCDCFY…LPVARLHGVG (182 aa). Residues Asp-10 and Asp-105 each contribute to the Mg(2+) site. Glu-106 is a catalytic residue.

Belongs to the DNA polymerase type-Y family. In terms of assembly, monomer. Mg(2+) serves as cofactor.

It localises to the cytoplasm. The catalysed reaction is DNA(n) + a 2'-deoxyribonucleoside 5'-triphosphate = DNA(n+1) + diphosphate. Functionally, poorly processive, error-prone DNA polymerase involved in untargeted mutagenesis. Copies undamaged DNA at stalled replication forks, which arise in vivo from mismatched or misaligned primer ends. These misaligned primers can be extended by PolIV. Exhibits no 3'-5' exonuclease (proofreading) activity. May be involved in translesional synthesis, in conjunction with the beta clamp from PolIII. The protein is DNA polymerase IV of Pseudomonas putida (strain ATCC 47054 / DSM 6125 / CFBP 8728 / NCIMB 11950 / KT2440).